The chain runs to 197 residues: Elongation factor Ts (197 aa).

Residues 81–84 (TDFV) are involved in Mg(2+) ion dislocation from EF-Tu.

This sequence belongs to the EF-Ts family.

The protein localises to the cytoplasm. In terms of biological role, associates with the EF-Tu.GDP complex and induces the exchange of GDP to GTP. It remains bound to the aminoacyl-tRNA.EF-Tu.GTP complex up to the GTP hydrolysis stage on the ribosome. The protein is Elongation factor Ts of Fervidobacterium nodosum (strain ATCC 35602 / DSM 5306 / Rt17-B1).